The primary structure comprises 145 residues: Large ribosomal subunit protein uL16 (145 aa).

The protein belongs to the universal ribosomal protein uL16 family. Part of the 50S ribosomal subunit.

Binds 23S rRNA and is also seen to make contacts with the A and possibly P site tRNAs. This is Large ribosomal subunit protein uL16 from Lactobacillus johnsonii (strain CNCM I-12250 / La1 / NCC 533).